We begin with the raw amino-acid sequence, 378 residues long: Glutamate 5-kinase (378 aa).

Lysine 19 is an ATP binding site. The substrate site is built by serine 59, aspartate 146, and asparagine 158. Residues 178–179 (TD) and 220–226 (TGGMATK) each bind ATP. Residues 285 to 363 (QGQIQVDAGA…GEIGEILGYK (79 aa)) enclose the PUA domain.

This sequence belongs to the glutamate 5-kinase family.

The protein localises to the cytoplasm. The enzyme catalyses L-glutamate + ATP = L-glutamyl 5-phosphate + ADP. It participates in amino-acid biosynthesis; L-proline biosynthesis; L-glutamate 5-semialdehyde from L-glutamate: step 1/2. In terms of biological role, catalyzes the transfer of a phosphate group to glutamate to form L-glutamate 5-phosphate. This is Glutamate 5-kinase from Moorella thermoacetica (strain ATCC 39073 / JCM 9320).